Consider the following 241-residue polypeptide: Triosephosphate isomerase (241 aa).

Residue 8-10 participates in substrate binding; sequence NWK. Residue His93 is the Electrophile of the active site. Catalysis depends on Glu163, which acts as the Proton acceptor. Substrate is bound by residues Gly169, Ser205, and 226-227; that span reads GG.

It belongs to the triosephosphate isomerase family. Homodimer.

The protein localises to the cytoplasm. It carries out the reaction D-glyceraldehyde 3-phosphate = dihydroxyacetone phosphate. It functions in the pathway carbohydrate biosynthesis; gluconeogenesis. The protein operates within carbohydrate degradation; glycolysis; D-glyceraldehyde 3-phosphate from glycerone phosphate: step 1/1. Involved in the gluconeogenesis. Catalyzes stereospecifically the conversion of dihydroxyacetone phosphate (DHAP) to D-glyceraldehyde-3-phosphate (G3P). This Bdellovibrio bacteriovorus (strain ATCC 15356 / DSM 50701 / NCIMB 9529 / HD100) protein is Triosephosphate isomerase.